Here is a 378-residue protein sequence, read N- to C-terminus: Cytochrome b (378 aa).

4 consecutive transmembrane segments (helical) span residues 34–54 (FGSL…FLAM), 78–99 (WLLR…YLHV), 114–134 (WLIG…GYVL), and 179–199 (FFTF…IHLL). Residues His-84 and His-98 each coordinate heme b. The heme b site is built by His-183 and His-197. A ubiquinone is bound at residue His-202. 4 helical membrane-spanning segments follow: residues 227 to 247 (FKDI…VLIS), 289 to 309 (LGGV…PFYN), 321 to 341 (INQV…WIGA), and 348 to 368 (YVLI…VNPL).

The protein belongs to the cytochrome b family. In terms of assembly, the main subunits of complex b-c1 are: cytochrome b, cytochrome c1 and the Rieske protein. The cofactor is heme b.

It localises to the mitochondrion inner membrane. Its function is as follows. Component of the ubiquinol-cytochrome c reductase complex (complex III or cytochrome b-c1 complex) that is part of the mitochondrial respiratory chain. The b-c1 complex mediates electron transfer from ubiquinol to cytochrome c. Contributes to the generation of a proton gradient across the mitochondrial membrane that is then used for ATP synthesis. The polypeptide is Cytochrome b (mt:Cyt-b) (Drosophila melanogaster (Fruit fly)).